Reading from the N-terminus, the 593-residue chain is ETS-related transcription factor Elf-2 (593 aa).

A disordered region spans residues 1–34; it reads MASAVVDSGGSALELPSDGGENQEGGDTGPDCPA. Position 107 is a phosphoserine (Ser-107). A disordered region spans residues 146 to 199; sequence VEVSTEESEPMDASPIPTSPDSHEPMKKKKVGRKPKTQQSPVSNGSPELGIKKK. A compositionally biased stretch (basic residues) spans 171–181; the sequence is MKKKKVGRKPK. At Thr-182 the chain carries Phosphothreonine. Polar residues predominate over residues 182–191; that stretch reads TQQSPVSNGS. Ser-185 and Ser-191 each carry phosphoserine. The segment at residues 208–290 is a DNA-binding region (ETS); sequence TYLWEFLLDL…EGQRLVYQFK (83 aa). A disordered region spans residues 362 to 383; the sequence is TSPTHDGSSRSPTTTAPVSAAA. Phosphoserine occurs at positions 363 and 372. The segment covering 370–383 has biased composition (low complexity); it reads SRSPTTTAPVSAAA. Phosphothreonine is present on Thr-376. Ser-432 is subject to Phosphoserine. Arg-496 is modified (omega-N-methylarginine). Thr-523 is modified (phosphothreonine). Lys-538 participates in a covalent cross-link: Glycyl lysine isopeptide (Lys-Gly) (interchain with G-Cter in SUMO2).

It belongs to the ETS family. As to quaternary structure, interacts with LIM domains of LMO2. Interacts via its N-terminal region with RUNX1. As to expression, expressed in all tissues examined. Highest levels in thymocytes and bone marrow.

The protein localises to the nucleus. Functionally, probably transcriptionally activates the LYN and BLK promoters and acts synergistically with RUNX1 to transactivate the BLK promoter. The protein is ETS-related transcription factor Elf-2 of Mus musculus (Mouse).